Here is a 104-residue protein sequence, read N- to C-terminus: Large ribosomal subunit protein uL24 (104 aa).

The protein belongs to the universal ribosomal protein uL24 family. As to quaternary structure, part of the 50S ribosomal subunit.

One of two assembly initiator proteins, it binds directly to the 5'-end of the 23S rRNA, where it nucleates assembly of the 50S subunit. Its function is as follows. One of the proteins that surrounds the polypeptide exit tunnel on the outside of the subunit. The chain is Large ribosomal subunit protein uL24 from Shigella flexneri.